The following is a 69-amino-acid chain: DNA-directed RNA polymerase subunit omega (69 aa).

This sequence belongs to the RNA polymerase subunit omega family. The RNAP catalytic core consists of 2 alpha, 1 beta, 1 beta' and 1 omega subunit. When a sigma factor is associated with the core the holoenzyme is formed, which can initiate transcription.

The enzyme catalyses RNA(n) + a ribonucleoside 5'-triphosphate = RNA(n+1) + diphosphate. Promotes RNA polymerase assembly. Latches the N- and C-terminal regions of the beta' subunit thereby facilitating its interaction with the beta and alpha subunits. The protein is DNA-directed RNA polymerase subunit omega of Geobacter metallireducens (strain ATCC 53774 / DSM 7210 / GS-15).